A 342-amino-acid polypeptide reads, in one-letter code: MQYAVVFGGKSYEHEISIVSTIAIKDIIPGAIFIFLDGNRDFYLIEKADLKSNYFSSGNYKKSPKLELKKGGFYQKSLLKEKKIPADVVINLVHGADGEDGKLASLLEFFEIDYIGPRIEGSVISYSKLLTKLYAKECGIEVLPYQLLRKQDKKIIDFEYPVIIKPNHLGSSIGVSVVYDSSELEYALDVAFEFDDEVLIEPFIEGIEEYNLAGAKGQTFHFSKIEAVKKEKLLDFEKKYLDFGRSGEVKDASLNETLRLHIRNAFEKIYDPLFSGAIIRIDFFVRDGKLYLNEINPVPGSLANYLFGDFRAVLEDVAKHLPKSKNIVIDYRYINSIQSAKK.

The ATP-grasp domain maps to 132–326 (KLYAKECGIE…VAKHLPKSKN (195 aa)). 159–210 (EYPVIIKPNHLGSSIGVSVVYDSSELEYALDVAFEFDDEVLIEPFIEGIEEY) is an ATP binding site. Positions 282, 294, and 296 each coordinate Mg(2+).

The protein belongs to the D-alanine--D-alanine ligase family. It depends on Mg(2+) as a cofactor. Mn(2+) is required as a cofactor.

It is found in the cytoplasm. It catalyses the reaction 2 D-alanine + ATP = D-alanyl-D-alanine + ADP + phosphate + H(+). It functions in the pathway cell wall biogenesis; peptidoglycan biosynthesis. Functionally, cell wall formation. The chain is D-alanine--D-alanine ligase from Nitratiruptor sp. (strain SB155-2).